Consider the following 167-residue polypeptide: Ribosome maturation factor RimM (167 aa).

Positions 92–166 (DDEFYHADLI…RIVADPPEEQ (75 aa)) constitute a PRC barrel domain.

The protein belongs to the RimM family. Binds ribosomal protein uS19.

The protein localises to the cytoplasm. In terms of biological role, an accessory protein needed during the final step in the assembly of 30S ribosomal subunit, possibly for assembly of the head region. Essential for efficient processing of 16S rRNA. May be needed both before and after RbfA during the maturation of 16S rRNA. It has affinity for free ribosomal 30S subunits but not for 70S ribosomes. The polypeptide is Ribosome maturation factor RimM (Paracoccus denitrificans (strain Pd 1222)).